The primary structure comprises 200 residues: Small ribosomal subunit protein uS4 (200 aa).

The disordered stretch occupies residues 21–42; sequence GTGKELQKRPYPPGQHGPGQRR. One can recognise an S4 RNA-binding domain in the interval 92–155; sequence SRLDNLVYRL…RNLQVIKEAI (64 aa).

It belongs to the universal ribosomal protein uS4 family. Part of the 30S ribosomal subunit. Contacts protein S5. The interaction surface between S4 and S5 is involved in control of translational fidelity.

One of the primary rRNA binding proteins, it binds directly to 16S rRNA where it nucleates assembly of the body of the 30S subunit. In terms of biological role, with S5 and S12 plays an important role in translational accuracy. This is Small ribosomal subunit protein uS4 from Geobacillus thermodenitrificans (strain NG80-2).